Here is a 469-residue protein sequence, read N- to C-terminus: Glutamate--tRNA ligase (469 aa).

Positions 10–20 (PSPTGYLHVGG) match the 'HIGH' region motif. The Zn(2+) site is built by cysteine 99, cysteine 101, cysteine 126, and aspartate 128. Positions 238–242 (RLSKR) match the 'KMSKS' region motif. Position 241 (lysine 241) interacts with ATP.

It belongs to the class-I aminoacyl-tRNA synthetase family. Glutamate--tRNA ligase type 1 subfamily. Monomer. Requires Zn(2+) as cofactor.

Its subcellular location is the cytoplasm. It carries out the reaction tRNA(Glu) + L-glutamate + ATP = L-glutamyl-tRNA(Glu) + AMP + diphosphate. Its function is as follows. Catalyzes the attachment of glutamate to tRNA(Glu) in a two-step reaction: glutamate is first activated by ATP to form Glu-AMP and then transferred to the acceptor end of tRNA(Glu). This chain is Glutamate--tRNA ligase, found in Pelobacter propionicus (strain DSM 2379 / NBRC 103807 / OttBd1).